The primary structure comprises 426 residues: Serine--tRNA ligase (426 aa).

L-serine is bound at residue 233 to 235 (TSE). 264–266 (RSE) contacts ATP. Position 287 (E287) interacts with L-serine. 351 to 354 (EISS) contacts ATP. An L-serine-binding site is contributed by S387.

Belongs to the class-II aminoacyl-tRNA synthetase family. Type-1 seryl-tRNA synthetase subfamily. In terms of assembly, homodimer. The tRNA molecule binds across the dimer.

The protein resides in the cytoplasm. The catalysed reaction is tRNA(Ser) + L-serine + ATP = L-seryl-tRNA(Ser) + AMP + diphosphate + H(+). It carries out the reaction tRNA(Sec) + L-serine + ATP = L-seryl-tRNA(Sec) + AMP + diphosphate + H(+). It functions in the pathway aminoacyl-tRNA biosynthesis; selenocysteinyl-tRNA(Sec) biosynthesis; L-seryl-tRNA(Sec) from L-serine and tRNA(Sec): step 1/1. Catalyzes the attachment of serine to tRNA(Ser). Is also able to aminoacylate tRNA(Sec) with serine, to form the misacylated tRNA L-seryl-tRNA(Sec), which will be further converted into selenocysteinyl-tRNA(Sec). This is Serine--tRNA ligase from Xylella fastidiosa (strain M12).